A 312-amino-acid polypeptide reads, in one-letter code: Heterotepalin-4 (312 aa).

The N-terminal stretch at 1–22 (MKSMLVVTISVWLILAPTSTWA) is a signal peptide. Cystine bridges form between cysteine 56–cysteine 280 and cysteine 107–cysteine 128. Residue glutamate 197 is part of the active site. The propeptide occupies 284–312 (YNQNAMFPQLIMSTYYNYMANLGDLFEEF).

It catalyses the reaction Endohydrolysis of the N-glycosidic bond at one specific adenosine on the 28S rRNA.. Its function is as follows. Inhibits protein synthesis in vitro. The chain is Heterotepalin-4 from Phytolacca heterotepala (Mexican pokeweed).